A 444-amino-acid chain; its full sequence is Pineal opsin (444 aa).

The segment at 1-20 (MDALQESPPSHHSLPSALPS) is disordered. The Extracellular segment spans residues 1–46 (MDALQESPPSHHSLPSALPSATGGNGTVATMHNPFERPLEGIAPWN). Residues 7-20 (SPPSHHSLPSALPS) show a composition bias toward low complexity. Asn-25 carries N-linked (GlcNAc...) asparagine glycosylation. The chain crosses the membrane as a helical span at residues 47-71 (FTMLAALMGTITALSLGENFAVIVV). The Cytoplasmic portion of the chain corresponds to 72–83 (TARFRQLRQPLN). The chain crosses the membrane as a helical span at residues 84–108 (YVLVNLAAADLLVSAIGGSVSFFTN). Topologically, residues 109–123 (IKGYFFLGVHACVLE) are extracellular. Cys-120 and Cys-197 form a disulfide bridge. The helical transmembrane segment at 124–143 (GFAVTYFGVVALWSLALLAF) threads the bilayer. At 144–162 (ERYFVICRPLGNFRLQSKH) the chain is on the cytoplasmic side. A helical membrane pass occupies residues 163-186 (AVLGLAVVWVFSLACTLPPVLGWS). At 187 to 210 (SYRPSMIGTTCEPNWYSGELHDHT) the chain is on the extracellular side. Residues 211 to 238 (FILMFFSTCFIFPLAVIFFSYGKLIQKL) traverse the membrane as a helical segment. Residues 239-260 (KKASETQRGLESTRRAEQQVTR) are Cytoplasmic-facing. Residues 261-284 (MVVVMILAFLVCWMPYATFSIVVT) form a helical membrane-spanning segment. Residues 285–292 (ACPTIHLD) are Extracellular-facing. Residues 293–317 (PLLAAVPAFFSKTATVYNPVIYIFM) traverse the membrane as a helical segment. The residue at position 304 (Lys-304) is an N6-(retinylidene)lysine. The Cytoplasmic portion of the chain corresponds to 318 to 444 (NKQFRDCFVQ…SESVSKICPV (127 aa)). A lipid anchor (S-palmitoyl cysteine) is attached at Cys-331. 2 disordered regions span residues 341–360 (QTAG…QSPG) and 388–420 (EPTM…QQGT). Over residues 409 to 419 (QQQGQQQQQQG) the composition is skewed to low complexity.

The protein belongs to the G-protein coupled receptor 1 family. Opsin subfamily. In terms of processing, phosphorylated on some or all of the serine and threonine residues present in the C-terminal region. As to expression, pineal gland.

It is found in the membrane. This chain is Pineal opsin, found in Petromyzon marinus (Sea lamprey).